A 432-amino-acid polypeptide reads, in one-letter code: 3-phosphoshikimate 1-carboxyvinyltransferase (432 aa).

Lys-23, Ser-24, and Arg-28 together coordinate 3-phosphoshikimate. Lys-23 is a phosphoenolpyruvate binding site. Positions 95 and 123 each coordinate phosphoenolpyruvate. The 3-phosphoshikimate site is built by Ser-167, Gln-169, Asp-317, and Lys-344. Gln-169 provides a ligand contact to phosphoenolpyruvate. Asp-317 (proton acceptor) is an active-site residue. Residues Arg-348 and Arg-390 each contribute to the phosphoenolpyruvate site.

This sequence belongs to the EPSP synthase family. As to quaternary structure, monomer.

The protein localises to the cytoplasm. It catalyses the reaction 3-phosphoshikimate + phosphoenolpyruvate = 5-O-(1-carboxyvinyl)-3-phosphoshikimate + phosphate. It participates in metabolic intermediate biosynthesis; chorismate biosynthesis; chorismate from D-erythrose 4-phosphate and phosphoenolpyruvate: step 6/7. In terms of biological role, catalyzes the transfer of the enolpyruvyl moiety of phosphoenolpyruvate (PEP) to the 5-hydroxyl of shikimate-3-phosphate (S3P) to produce enolpyruvyl shikimate-3-phosphate and inorganic phosphate. This is 3-phosphoshikimate 1-carboxyvinyltransferase from Staphylococcus saprophyticus subsp. saprophyticus (strain ATCC 15305 / DSM 20229 / NCIMB 8711 / NCTC 7292 / S-41).